Here is a 150-residue protein sequence, read N- to C-terminus: Viral late gene transcription factor 2 (150 aa).

Belongs to the orthopoxvirus VLTF-2/OPG126 family. Interacts with itself. Interacts with the late transcription factors VLTF-1/OPG093.

Functionally, acts with RNA polymerase to initiate transcription from late gene promoters. This Vaccinia virus (strain Western Reserve) (VACV) protein is Viral late gene transcription factor 2 (OPG126).